Reading from the N-terminus, the 518-residue chain is Gypsy retrotransposon integrase-like protein 1 (518 aa).

Residues 130–292 (QQHLPMVGNP…TPYFQMFNRN (163 aa)) form the Integrase catalytic domain. Phosphoserine is present on serine 498.

The chain is Gypsy retrotransposon integrase-like protein 1 (Gin1) from Mus musculus (Mouse).